The primary structure comprises 242 residues: Uridylate kinase (242 aa).

11-14 (KLSG) serves as a coordination point for ATP. The involved in allosteric activation by GTP stretch occupies residues 19-24 (GEKGAG). Gly-53 lines the UMP pocket. ATP is bound by residues Gly-54 and Arg-58. UMP-binding positions include Asp-73 and 134–141 (IGSPYFST). 3 residues coordinate ATP: Asn-162, Tyr-168, and Asp-171.

This sequence belongs to the UMP kinase family. As to quaternary structure, homohexamer.

The protein resides in the cytoplasm. It catalyses the reaction UMP + ATP = UDP + ADP. It functions in the pathway pyrimidine metabolism; CTP biosynthesis via de novo pathway; UDP from UMP (UMPK route): step 1/1. With respect to regulation, allosterically activated by GTP. Inhibited by UTP. Functionally, catalyzes the reversible phosphorylation of UMP to UDP. The polypeptide is Uridylate kinase (Streptococcus pyogenes serotype M2 (strain MGAS10270)).